Reading from the N-terminus, the 514-residue chain is 1-pyrroline-5-carboxylate dehydrogenase (514 aa).

Residues glutamate 286 and cysteine 320 contribute to the active site.

It belongs to the aldehyde dehydrogenase family. RocA subfamily.

The enzyme catalyses L-glutamate 5-semialdehyde + NAD(+) + H2O = L-glutamate + NADH + 2 H(+). The protein operates within amino-acid degradation; L-proline degradation into L-glutamate; L-glutamate from L-proline: step 2/2. In Staphylococcus aureus (strain MW2), this protein is 1-pyrroline-5-carboxylate dehydrogenase.